A 482-amino-acid chain; its full sequence is Glutamyl-tRNA(Gln) amidotransferase subunit A (482 aa).

Catalysis depends on charge relay system residues K75 and S150. S174 functions as the Acyl-ester intermediate in the catalytic mechanism.

Belongs to the amidase family. GatA subfamily. Heterotrimer of A, B and C subunits.

The catalysed reaction is L-glutamyl-tRNA(Gln) + L-glutamine + ATP + H2O = L-glutaminyl-tRNA(Gln) + L-glutamate + ADP + phosphate + H(+). In terms of biological role, allows the formation of correctly charged Gln-tRNA(Gln) through the transamidation of misacylated Glu-tRNA(Gln) in organisms which lack glutaminyl-tRNA synthetase. The reaction takes place in the presence of glutamine and ATP through an activated gamma-phospho-Glu-tRNA(Gln). This chain is Glutamyl-tRNA(Gln) amidotransferase subunit A, found in Acaryochloris marina (strain MBIC 11017).